The primary structure comprises 281 residues: Arylamine N-acetyltransferase / N-hydroxyarylamine O-acetyltransferase (281 aa).

Cys-69 functions as the Acyl-thioester intermediate in the catalytic mechanism. Residues His-107 and Asp-122 contribute to the active site.

It belongs to the arylamine N-acetyltransferase family. As to quaternary structure, monomer and homodimer.

The protein localises to the cytoplasm. The enzyme catalyses an arylamine + acetyl-CoA = an N-acetylarylamine + CoA. It catalyses the reaction an N-hydroxyarylamine + acetyl-CoA = an N-acetoxyarylamine + CoA. Its activity is regulated as follows. Inhibited by N-ethylmaleimide and iodoacetamide. Catalyzes both the acetyl-CoA-dependent N-acetylation of aromatic amines and the O-acetylation of N-hydroxyarylamines. In vitro, catalyzes the O-acetylation of N-hydroxy-Glu-P-1, and the N-acetylation of isoniazid and 2-aminofluorene. The protein is Arylamine N-acetyltransferase / N-hydroxyarylamine O-acetyltransferase (nhoA) of Salmonella typhimurium (strain LT2 / SGSC1412 / ATCC 700720).